Consider the following 642-residue polypeptide: Chaperone protein HtpG (642 aa).

The segment at 1 to 349 (MSAATETEVR…SADLPLNVSR (349 aa)) is a; substrate-binding. A disordered region spans residues 216 to 238 (ELPPAPPAKEGEEPEPPKTPEWE). Basic and acidic residues predominate over residues 224–236 (KEGEEPEPPKTPE). The b stretch occupies residues 350-570 (EILQQNRQVE…AHDMSATLER (221 aa)). Positions 571–642 (LLKEAGQEVP…VKRLNKLLMG (72 aa)) are c.

It belongs to the heat shock protein 90 family. In terms of assembly, homodimer.

It localises to the cytoplasm. In terms of biological role, molecular chaperone. Has ATPase activity. This chain is Chaperone protein HtpG, found in Magnetococcus marinus (strain ATCC BAA-1437 / JCM 17883 / MC-1).